The primary structure comprises 339 residues: DNA-directed RNA polymerase subunit alpha (339 aa).

The interval 1–233 (MVREEVAGST…DLFLPFLHAE (233 aa)) is alpha N-terminal domain (alpha-NTD). Positions 264 to 339 (KKGIPLNYIF…IDLLKNKLSF (76 aa)) are alpha C-terminal domain (alpha-CTD).

The protein belongs to the RNA polymerase alpha chain family. In plastids the minimal PEP RNA polymerase catalytic core is composed of four subunits: alpha, beta, beta', and beta''. When a (nuclear-encoded) sigma factor is associated with the core the holoenzyme is formed, which can initiate transcription.

Its subcellular location is the plastid. The protein resides in the chloroplast. It carries out the reaction RNA(n) + a ribonucleoside 5'-triphosphate = RNA(n+1) + diphosphate. DNA-dependent RNA polymerase catalyzes the transcription of DNA into RNA using the four ribonucleoside triphosphates as substrates. In Psathyrostachys rupestris (Hordeum rupestre), this protein is DNA-directed RNA polymerase subunit alpha.